The primary structure comprises 448 residues: CCA-adding enzyme (448 aa).

S52 and K55 together coordinate ATP. CTP is bound by residues S52 and K55. Residues D64, D66, and D118 each contribute to the Mg(2+) site. Residues H141, K160, and Y169 each coordinate ATP. The CTP site is built by H141, K160, and Y169.

This sequence belongs to the tRNA nucleotidyltransferase/poly(A) polymerase family. Archaeal CCA-adding enzyme subfamily. Homodimer. Mg(2+) serves as cofactor.

The catalysed reaction is a tRNA precursor + 2 CTP + ATP = a tRNA with a 3' CCA end + 3 diphosphate. It carries out the reaction a tRNA with a 3' CCA end + 2 CTP + ATP = a tRNA with a 3' CCACCA end + 3 diphosphate. Catalyzes the addition and repair of the essential 3'-terminal CCA sequence in tRNAs without using a nucleic acid template. Adds these three nucleotides in the order of C, C, and A to the tRNA nucleotide-73, using CTP and ATP as substrates and producing inorganic pyrophosphate. tRNA 3'-terminal CCA addition is required both for tRNA processing and repair. Also involved in tRNA surveillance by mediating tandem CCA addition to generate a CCACCA at the 3' terminus of unstable tRNAs. While stable tRNAs receive only 3'-terminal CCA, unstable tRNAs are marked with CCACCA and rapidly degraded. This chain is CCA-adding enzyme, found in Pyrococcus abyssi (strain GE5 / Orsay).